Consider the following 183-residue polypeptide: Inner membrane protein YgjV (183 aa).

Topologically, residues 1–2 are periplasmic; the sequence is MT. Residues 3–23 form a helical membrane-spanning segment; it reads AYWLAQGVGVIAFLIGITTFF. Over 24 to 38 the chain is Cytoplasmic; that stretch reads NRDERRFKKQLSVYS. The helical transmembrane segment at 39–59 threads the bilayer; it reads AVIGVHFFLLGTYPAGASAIL. Topologically, residues 60 to 71 are periplasmic; the sequence is NAIRTLITLRTR. The next 2 helical transmembrane spans lie at 72 to 92 and 93 to 113; these read SLWV…AKFH and HPVE…LFCC. The Periplasmic segment spans residues 114–133; it reads KGLTMRCVMWFSTCCWVIHN. A helical transmembrane segment spans residues 134 to 154; sequence FWAGSIGGTMIEGSFLLMNGL. Topologically, residues 155 to 183 are cytoplasmic; the sequence is NIIRFWRMQKRGIDPFKVEKTPSAVDERG.

The protein resides in the cell inner membrane. This Escherichia coli (strain K12) protein is Inner membrane protein YgjV (ygjV).